The primary structure comprises 635 residues: Threonine--tRNA ligase (635 aa).

The TGS domain maps to 1–61 (MIAITLPDGS…DRDAELAIVT (61 aa)). The catalytic stretch occupies residues 242 to 533 (DHRKLGKTLD…LLENHAGALP (292 aa)). Zn(2+) contacts are provided by cysteine 333, histidine 384, and histidine 510.

It belongs to the class-II aminoacyl-tRNA synthetase family. Homodimer. Requires Zn(2+) as cofactor.

It is found in the cytoplasm. The catalysed reaction is tRNA(Thr) + L-threonine + ATP = L-threonyl-tRNA(Thr) + AMP + diphosphate + H(+). In terms of biological role, catalyzes the attachment of threonine to tRNA(Thr) in a two-step reaction: L-threonine is first activated by ATP to form Thr-AMP and then transferred to the acceptor end of tRNA(Thr). Also edits incorrectly charged L-seryl-tRNA(Thr). The sequence is that of Threonine--tRNA ligase from Cupriavidus necator (strain ATCC 17699 / DSM 428 / KCTC 22496 / NCIMB 10442 / H16 / Stanier 337) (Ralstonia eutropha).